A 1067-amino-acid chain; its full sequence is Zinc finger MIZ domain-containing protein 1 (1067 aa).

The tract at residues 1-120 (MNSMDRHIQQ…HQKSRQSDPP (120 aa)) is sufficient for transactivation activity; sufficient for interaction with NOTCH1. A Glycyl lysine isopeptide (Lys-Gly) (interchain with G-Cter in SUMO2) cross-link involves residue Lys91. Disordered regions lie at residues 112-141 (QKSR…TLSH) and 327-542 (NSQF…PFPP). Residues 128–141 (PLSSMSSMKPTLSH) are compositionally biased toward low complexity. A compositionally biased stretch (polar residues) spans 413–429 (YGNQQYGPNSQFPTQPG). The segment covering 431–440 (YPAPNPPRPL) has biased composition (pro residues). The segment covering 479–497 (NNTFSGSSYSNYSQGNVNR) has biased composition (low complexity). The segment covering 510–521 (SPVPGNPTPPMT) has biased composition (pro residues). The SP-RING-type zinc-finger motif lies at 727–808 (GEDGVEQTAI…MWGILNAIQH (82 aa)). Zn(2+)-binding residues include Cys758, His760, Cys781, and Cys784. Glycyl lysine isopeptide (Lys-Gly) (interchain with G-Cter in SUMO2) cross-links involve residues Lys834 and Lys843. The tract at residues 837 to 1067 (PDGIPSKRFK…DDLLSLFENN (231 aa)) is transactivation domain. Over residues 868–879 (GPSPYPLPPPPG) the composition is skewed to pro residues. Positions 868–1067 (GPSPYPLPPP…DDLLSLFENN (200 aa)) are disordered. Composition is skewed to polar residues over residues 881 to 895 (TNSN…NYQG) and 951 to 961 (SSDQPHPSIQQ). The segment covering 981 to 996 (APPPPPSQPPRQPPQA) has biased composition (pro residues). The span at 1040 to 1067 (PDELLSYLDPPDLPSNSNDDLLSLFENN) shows a compositional bias: low complexity.

As to quaternary structure, interacts with AR, but not with ESR1, NR3C1, PGR, THRB nor VDR. Interacts with NOTCH1 and RBPJ. Interacts with SMARCA4. Interacts (via SP-RING-type domain) with SMAD3 and SMAD4 (via MH2 domain). As to expression, expressed most abundantly in ovary and, at lower levels, in prostate, spleen and testis. Weak expression, if any, in thymus, small intestine, colon and peripheral blood leukocytes.

The protein resides in the nucleus. It localises to the nucleoplasm. Its subcellular location is the cytoplasm. Its function is as follows. Acts as a transcriptional coactivator. Increases ligand-dependent transcriptional activity of AR and promotes AR sumoylation. The stimulation of AR activity is dependent upon sumoylation. Also functions as a transcriptional coactivator in the TGF-beta signaling pathway by increasing the activity of the SMAD3/SMAD4 transcriptional complex. Involved in transcriptional activation of a subset of NOTCH1 target genes including MYC. Involved in thymocyte and T cell development. Involved in the regulation of postmitotic positioning of pyramidal neurons in the developing cerebral cortex. This Homo sapiens (Human) protein is Zinc finger MIZ domain-containing protein 1.